Consider the following 376-residue polypeptide: Dual-specificity RNA methyltransferase RlmN (376 aa).

Glutamate 96 (proton acceptor) is an active-site residue. Residues 102–341 (DEDRATLCVS…VVVRKTRGDD (240 aa)) enclose the Radical SAM core domain. Cysteine 109 and cysteine 346 are disulfide-bonded. [4Fe-4S] cluster-binding residues include cysteine 116, cysteine 120, and cysteine 123. S-adenosyl-L-methionine contacts are provided by residues 170-171 (GE), serine 202, 224-226 (SLH), and asparagine 303. Cysteine 346 acts as the S-methylcysteine intermediate in catalysis.

This sequence belongs to the radical SAM superfamily. RlmN family. The cofactor is [4Fe-4S] cluster.

It is found in the cytoplasm. It carries out the reaction adenosine(2503) in 23S rRNA + 2 reduced [2Fe-2S]-[ferredoxin] + 2 S-adenosyl-L-methionine = 2-methyladenosine(2503) in 23S rRNA + 5'-deoxyadenosine + L-methionine + 2 oxidized [2Fe-2S]-[ferredoxin] + S-adenosyl-L-homocysteine. The enzyme catalyses adenosine(37) in tRNA + 2 reduced [2Fe-2S]-[ferredoxin] + 2 S-adenosyl-L-methionine = 2-methyladenosine(37) in tRNA + 5'-deoxyadenosine + L-methionine + 2 oxidized [2Fe-2S]-[ferredoxin] + S-adenosyl-L-homocysteine. In terms of biological role, specifically methylates position 2 of adenine 2503 in 23S rRNA and position 2 of adenine 37 in tRNAs. m2A2503 modification seems to play a crucial role in the proofreading step occurring at the peptidyl transferase center and thus would serve to optimize ribosomal fidelity. This chain is Dual-specificity RNA methyltransferase RlmN, found in Pseudoalteromonas atlantica (strain T6c / ATCC BAA-1087).